A 364-amino-acid chain; its full sequence is Probable zinc transporter 10 (364 aa).

An N-terminal signal peptide occupies residues 1-28 (MTKSHVIFSASIALFLLLSISHFPGALS). The Extracellular portion of the chain corresponds to 29-52 (QSNKDCQSKSNYSCIDKNKALDLK). A helical membrane pass occupies residues 53 to 73 (LLSIFSILITSLIGVCLPFFA). At 74-85 (RSIPAFQPEKSH) the chain is on the cytoplasmic side. A helical transmembrane segment spans residues 86 to 106 (FLIVKSFASGIILSTGFMHVL). Topologically, residues 107-125 (PDSFEMLSSPCLNDNPWHK) are extracellular. Residues 126-146 (FPFAGFVAMMSAVFTLMVDSI) form a helical membrane-spanning segment. The Cytoplasmic portion of the chain corresponds to 147–209 (TTSVFTKSGR…GSYLQLLRYR (63 aa)). A helical transmembrane segment spans residues 210-230 (ILAIVLELGIVVQSIVIGLSV). At 231–241 (GDTNNTCTIKG) the chain is on the extracellular side. A helical transmembrane segment spans residues 242–262 (LVAALCFHQMFEGMGLGGCIL). Residues 263 to 271 (QAEYGWVKK) lie on the Cytoplasmic side of the membrane. Residues 272–292 (AVMAFFFAVTTPFGVVLGMAL) traverse the membrane as a helical segment. The Extracellular segment spans residues 293–303 (SKTYKENSPES). Residues 304 to 324 (LITVGLLNASSAGLLIYMALV) form a helical membrane-spanning segment. At 325 to 343 (DLLAADFMGQKMQRSIKLQ) the chain is on the cytoplasmic side. A helical transmembrane segment spans residues 344 to 364 (LKSYAAVLLGAGGMSVMAKWA).

Belongs to the ZIP transporter (TC 2.A.5) family.

The protein resides in the cell membrane. Its function is as follows. Probably mediates zinc uptake from the rhizosphere. This Arabidopsis thaliana (Mouse-ear cress) protein is Probable zinc transporter 10 (ZIP10).